The following is a 311-amino-acid chain: Serine/threonine-protein phosphatase PP1-1 (311 aa).

4 residues coordinate Mn(2+): D53, H55, D82, and N114. H115 (proton donor) is an active-site residue. 2 residues coordinate Mn(2+): H164 and H238.

This sequence belongs to the PPP phosphatase family. PP-6 (PP-V) subfamily. Inactivated in a complex with phosphatase methylesterase PPE1 (PP2Ai). Interacts with phosphatase 2A activator RRD1, which can reactivate PP2Ai by dissociating the catalytic subunit from the complex. Forms a ternary complex with RRD1-TAP42. Mn(2+) is required as a cofactor.

The protein localises to the cytoplasm. The catalysed reaction is O-phospho-L-seryl-[protein] + H2O = L-seryl-[protein] + phosphate. It catalyses the reaction O-phospho-L-threonyl-[protein] + H2O = L-threonyl-[protein] + phosphate. Its function is as follows. Involved in the dephosphorylation of the large subunit of RNA polymerase II. Is required in late G1 for normal G1 cyclin expression, bud initiation and expression of certain genes that are periodically expressed during late G1. Associates with the SAP proteins in a cell cycle-dependent manner. This Saccharomyces cerevisiae (strain ATCC 204508 / S288c) (Baker's yeast) protein is Serine/threonine-protein phosphatase PP1-1 (SIT4).